The chain runs to 127 residues: Protein YwpG (127 aa).

Interacts with both the D1 and D2 domains of dynamin-like protein DynA.

It localises to the cell membrane. This Bacillus subtilis (strain 168) protein is Protein YwpG (ywpG).